Here is a 590-residue protein sequence, read N- to C-terminus: Aspartate--tRNA(Asp/Asn) ligase (590 aa).

Glu-175 is an L-aspartate binding site. The aspartate stretch occupies residues 199 to 202; the sequence is QQYK. Residues Arg-221 and His-450 each coordinate L-aspartate. 221–223 serves as a coordination point for ATP; it reads RDE. An ATP-binding site is contributed by Glu-484. An L-aspartate-binding site is contributed by Arg-491. An ATP-binding site is contributed by 536–539; that stretch reads GVDR.

This sequence belongs to the class-II aminoacyl-tRNA synthetase family. Type 1 subfamily. In terms of assembly, homodimer.

Its subcellular location is the cytoplasm. The catalysed reaction is tRNA(Asx) + L-aspartate + ATP = L-aspartyl-tRNA(Asx) + AMP + diphosphate. Functionally, aspartyl-tRNA synthetase with relaxed tRNA specificity since it is able to aspartylate not only its cognate tRNA(Asp) but also tRNA(Asn). Reaction proceeds in two steps: L-aspartate is first activated by ATP to form Asp-AMP and then transferred to the acceptor end of tRNA(Asp/Asn). The polypeptide is Aspartate--tRNA(Asp/Asn) ligase (Bradyrhizobium diazoefficiens (strain JCM 10833 / BCRC 13528 / IAM 13628 / NBRC 14792 / USDA 110)).